A 219-amino-acid chain; its full sequence is MSAPAANGEVPTFKLVLVGDGGTGKTTFVKRHLTGEFEKKYIATIGVEVHPLSFYTNFGEIKFDVWDTAGQEKFGGLRDGYYINAQCAIIMFDVTSRITYKNVPNWHRDLVRVCENIPIVLCGNKVDVKERKVKAKTITFHRKKNLQYYDISAKSNYNFEKPFLWLARKLAGNPQLEFVASPALAPPEVQVDEQLMQQYQQEMEQATALPLPDEDDADL.

Ser-2 carries the N-acetylserine modification. Ser-2 carries the phosphoserine modification. One can recognise a Small GTPase Ran-type domain in the interval 9-173 (EVPTFKLVLV…LWLARKLAGN (165 aa)). 20–27 (DGGTGKTT) serves as a coordination point for GTP. The switch-I stretch occupies residues 39–47 (KKYIATIGV). GTP is bound by residues Gly-70, 124-127 (NKVD), and 152-154 (SAK). A switch-II region spans residues 70–86 (GQEKFGGLRDGYYINAQ).

Belongs to the small GTPase superfamily. Ran family. Found in a nuclear export complex with RanGTP, exportin and pre-miRNA. Forms a complex with YRB1. Interacts with BUD5, CEX1, RRP12, SRM1, and DIS3/RRP44.

The protein localises to the nucleus. Its function is as follows. GTP-binding protein involved in nucleocytoplasmic transport. Required for the import of protein into the nucleus and also for RNA export. Essential for cell viability. By analogy with Ras, Ran may be activated when GTP is exchanged for bound GDP by RCC1 and inactivated when GTP is hydrolyzed by Ran upon activation by RanGAP1. The polypeptide is GTP-binding nuclear protein GSP1/CNR1 (GSP1) (Saccharomyces cerevisiae (strain ATCC 204508 / S288c) (Baker's yeast)).